We begin with the raw amino-acid sequence, 130 residues long: uncharacterized protein (130 aa).

Disordered regions lie at residues 1–47 (MTFY…QSNT) and 78–130 (QTLE…SESS). The span at 13–33 (QWKQLQTQQNKKNSPRPVTSS) shows a compositional bias: polar residues. Positions 86 to 110 (PSKHKRKRTKYRRTKKSKHHSRKKT) are enriched in basic residues. The span at 117–130 (SERDSTTGRESESS) shows a compositional bias: basic and acidic residues.

This is an uncharacterized protein from Torque teno mini virus 1 (isolate TLMV-CBD279).